Here is a 122-residue protein sequence, read N- to C-terminus: Non-specific lipid-transfer protein (122 aa).

The first 19 residues, 1 to 19 (MGVSRACFVVMVVVYMVVA), serve as a signal peptide directing secretion. Residues 20 to 29 (ATPNVKLAEA) constitute a propeptide that is removed on maturation. 4 disulfides stabilise this stretch: C32–C81, C42–C58, C59–C104, and C79–C118.

In terms of assembly, monomer.

Plant non-specific lipid-transfer proteins transfer phospholipids as well as galactolipids across membranes. May play a role in wax or cutin deposition in the cell walls of expanding epidermal cells and certain secretory tissues. Binds saturated fatty acids, unsaturated fatty acids, lysolipids and, with highest efficiency, jasmonic acid. Has weak antimicrobial activity against fungi. Inhibits spore germination and hyphae elongation in A.niger VKM F-2259 and N.crassa VKM F-184. Has no antibacterial activity against A.tumefaciens A281, C.michiganensis VKM Ac-144 and P.syringae VKM B-1546. This chain is Non-specific lipid-transfer protein, found in Anethum graveolens (Dill).